The sequence spans 104 residues: MAPAATAAAPRLLRAALLLLLLVAAGRRAAGAPVVNELRCQCLQTLQGIHLKNIQSVKVTTPGPHCDQTEVIASLKTGQEVCLNPTAPVVKKIIDKMLNKASAN.

A signal peptide spans 1-31 (MAPAATAAAPRLLRAALLLLLLVAAGRRAAG). Disulfide bonds link C40-C66 and C42-C82.

It belongs to the intercrine alpha (chemokine CxC) family.

Its subcellular location is the secreted. Its function is as follows. Plays a role in monocyte adhesion to the endothelium. This is Growth-regulated protein homolog from Oryctolagus cuniculus (Rabbit).